A 182-amino-acid chain; its full sequence is WUSCHEL-related homeobox 5 (182 aa).

The tract at residues 1-24 (MSFSVKGRSLRGNNNGGTGTKCGR) is disordered. Positions 20-84 (TKCGRWNPTV…NHKARERQKR (65 aa)) form a DNA-binding region, homeobox; WUS-type.

Belongs to the WUS homeobox family. As to expression, specifically expressed in the central cells of a quiescent center (QC) of the root.

Its subcellular location is the nucleus. In terms of biological role, transcription factor, which may be involved in the specification and maintenance of the stem cells (QC cells) in the root apical meristem (RAM). The chain is WUSCHEL-related homeobox 5 (WOX5) from Arabidopsis thaliana (Mouse-ear cress).